A 563-amino-acid polypeptide reads, in one-letter code: Calnexin homolog (563 aa).

Residues 1–23 (MRFNAAITGALVSSATLMGQAHA) form the signal peptide. Over 24-493 (EETEKKADAT…PINAVKQVPE (470 aa)) the chain is Lumenal. D98 contacts Ca(2+). A disulfide bridge links C141 with C175. Residues Y145, K147, Y166, and D173 each contribute to the an alpha-D-glucoside site. N-linked (GlcNAc...) asparagine glycosylation is present at N236. The tract at residues 241 to 323 (EDFAPPVNPE…EKPEDWDDEE (83 aa)) is disordered. Residues 249–279 (PEKEIDDPKDKKPADWVDEAKIPDPEAKKPD) are compositionally biased toward basic and acidic residues. A p domain (Extended arm) region spans residues 253–386 (IDDPKDKKPA…RKIPNPAYFE (134 aa)). Residues 280–305 (DWDEDAPYEIVDEEATMPEDWLEDEP) show a composition bias toward acidic residues. Residues C337 and C343 are joined by a disulfide bond. E402 lines the an alpha-D-glucoside pocket. D413 is a binding site for Ca(2+). A helical membrane pass occupies residues 494-514 (VAGGLGALLLTMILVIVGAVG). At 515 to 563 (ASSPAPAAAAKKGKEAASAAKEKASEAVSSAADTAKGAATKRNTRSSAQ) the chain is on the cytoplasmic side. Residues 521–563 (AAAAKKGKEAASAAKEKASEAVSSAADTAKGAATKRNTRSSAQ) are disordered. Residues 526–539 (KGKEAASAAKEKAS) show a composition bias toward basic and acidic residues.

Belongs to the calreticulin family.

It localises to the endoplasmic reticulum membrane. Functionally, interacts with newly synthesized monoglucosylated glycoproteins in the endoplasmic reticulum. It may act in assisting protein assembly and/or in the retention within the ER of unassembled protein subunits. It seems to play a major role in the quality control apparatus of the ER by the retention of incorrectly folded proteins. The chain is Calnexin homolog from Aspergillus fumigatus (strain ATCC MYA-4609 / CBS 101355 / FGSC A1100 / Af293) (Neosartorya fumigata).